A 235-amino-acid chain; its full sequence is Phosphoglycolate phosphatase (235 aa).

D14 functions as the Nucleophile in the catalytic mechanism. Positions 14, 16, and 177 each coordinate Mg(2+).

The protein belongs to the HAD-like hydrolase superfamily. CbbY/CbbZ/Gph/YieH family. Mg(2+) is required as a cofactor.

The enzyme catalyses 2-phosphoglycolate + H2O = glycolate + phosphate. It participates in organic acid metabolism; glycolate biosynthesis; glycolate from 2-phosphoglycolate: step 1/1. Its function is as follows. Specifically catalyzes the dephosphorylation of 2-phosphoglycolate. Is involved in the dissimilation of the intracellular 2-phosphoglycolate formed during the DNA repair of 3'-phosphoglycolate ends, a major class of DNA lesions induced by oxidative stress. This Neisseria meningitidis serogroup A / serotype 4A (strain DSM 15465 / Z2491) protein is Phosphoglycolate phosphatase.